Here is a 750-residue protein sequence, read N- to C-terminus: Photosystem I P700 chlorophyll a apoprotein A1 (750 aa).

8 consecutive transmembrane segments (helical) span residues 72–95 (VFSAHFGQLAVIFIWLSGMYFHGA), 158–181 (LYTTAIGGLIAAGLMFFAGWFHYH), 197–221 (MNHHLAGLLGLGSLSWAGHQIHVSL), 293–311 (TVHHHVAIAVLFIVAGHMY), 348–371 (WHAQLGLNLALMGSLSIIVAHHMY), 387–413 (LSLFTHHMWIGGFCIVGGAAHAAIFMV), 435–457 (AIISHLNWVCIFLGFHSFGLYIH), and 532–550 (FLVHHIHAFTIHVTVLILL). Cys-574 and Cys-583 together coordinate [4Fe-4S] cluster. The next 2 membrane-spanning stretches (helical) occupy residues 590 to 611 (HVFLGLFWMYNCLSIVIFHFSW) and 664 to 686 (LSAYGLMFLGAHFVWAFSLMFLF). His-675 is a chlorophyll a' binding site. Positions 683 and 691 each coordinate chlorophyll a. Trp-692 contributes to the phylloquinone binding site. A helical transmembrane segment spans residues 724–744 (AVGVAHYLLGGIATTWAFFLA).

Belongs to the PsaA/PsaB family. The PsaA/B heterodimer binds the P700 chlorophyll special pair and subsequent electron acceptors. PSI consists of a core antenna complex that captures photons, and an electron transfer chain that converts photonic excitation into a charge separation. The eukaryotic PSI reaction center is composed of at least 11 subunits. Requires P700 is a chlorophyll a/chlorophyll a' dimer, A0 is one or more chlorophyll a, A1 is one or both phylloquinones and FX is a shared 4Fe-4S iron-sulfur center. as cofactor.

It localises to the plastid. The protein localises to the chloroplast thylakoid membrane. The catalysed reaction is reduced [plastocyanin] + hnu + oxidized [2Fe-2S]-[ferredoxin] = oxidized [plastocyanin] + reduced [2Fe-2S]-[ferredoxin]. Functionally, psaA and PsaB bind P700, the primary electron donor of photosystem I (PSI), as well as the electron acceptors A0, A1 and FX. PSI is a plastocyanin-ferredoxin oxidoreductase, converting photonic excitation into a charge separation, which transfers an electron from the donor P700 chlorophyll pair to the spectroscopically characterized acceptors A0, A1, FX, FA and FB in turn. Oxidized P700 is reduced on the lumenal side of the thylakoid membrane by plastocyanin. This is Photosystem I P700 chlorophyll a apoprotein A1 from Mesostigma viride (Green alga).